The sequence spans 373 residues: Probable tRNA sulfurtransferase (373 aa).

A THUMP domain is found at 54–158 (NKNIEELSKV…NDVAYFYHKI (105 aa)). Residues 176-177 (LF), 201-202 (NF), K256, G278, and Q287 each bind ATP.

This sequence belongs to the ThiI family.

Its subcellular location is the cytoplasm. It catalyses the reaction [ThiI sulfur-carrier protein]-S-sulfanyl-L-cysteine + a uridine in tRNA + 2 reduced [2Fe-2S]-[ferredoxin] + ATP + H(+) = [ThiI sulfur-carrier protein]-L-cysteine + a 4-thiouridine in tRNA + 2 oxidized [2Fe-2S]-[ferredoxin] + AMP + diphosphate. The enzyme catalyses [ThiS sulfur-carrier protein]-C-terminal Gly-Gly-AMP + S-sulfanyl-L-cysteinyl-[cysteine desulfurase] + AH2 = [ThiS sulfur-carrier protein]-C-terminal-Gly-aminoethanethioate + L-cysteinyl-[cysteine desulfurase] + A + AMP + 2 H(+). Its pathway is cofactor biosynthesis; thiamine diphosphate biosynthesis. Functionally, catalyzes the ATP-dependent transfer of a sulfur to tRNA to produce 4-thiouridine in position 8 of tRNAs, which functions as a near-UV photosensor. Also catalyzes the transfer of sulfur to the sulfur carrier protein ThiS, forming ThiS-thiocarboxylate. This is a step in the synthesis of thiazole, in the thiamine biosynthesis pathway. The sulfur is donated as persulfide by IscS. This chain is Probable tRNA sulfurtransferase, found in Saccharolobus islandicus (strain M.16.27) (Sulfolobus islandicus).